Reading from the N-terminus, the 92-residue chain is Small ribosomal subunit protein uS19 (92 aa).

This sequence belongs to the universal ribosomal protein uS19 family.

Its function is as follows. Protein S19 forms a complex with S13 that binds strongly to the 16S ribosomal RNA. The polypeptide is Small ribosomal subunit protein uS19 (Allorhizobium ampelinum (strain ATCC BAA-846 / DSM 112012 / S4) (Agrobacterium vitis (strain S4))).